Consider the following 209-residue polypeptide: Uracil phosphoribosyltransferase (209 aa).

5-phospho-alpha-D-ribose 1-diphosphate contacts are provided by residues R79, R104, and 131–139; that span reads DPMLATGGS. Residues I194 and 199–201 each bind uracil; that span reads GDA. D200 contributes to the 5-phospho-alpha-D-ribose 1-diphosphate binding site.

The protein belongs to the UPRTase family. Mg(2+) is required as a cofactor.

The enzyme catalyses UMP + diphosphate = 5-phospho-alpha-D-ribose 1-diphosphate + uracil. It functions in the pathway pyrimidine metabolism; UMP biosynthesis via salvage pathway; UMP from uracil: step 1/1. Its activity is regulated as follows. Allosterically activated by GTP. Its function is as follows. Catalyzes the conversion of uracil and 5-phospho-alpha-D-ribose 1-diphosphate (PRPP) to UMP and diphosphate. The polypeptide is Uracil phosphoribosyltransferase (Streptococcus salivarius).